We begin with the raw amino-acid sequence, 139 residues long: Endoribonuclease YbeY (139 aa).

3 residues coordinate Zn(2+): His110, His114, and His120.

This sequence belongs to the endoribonuclease YbeY family. Zn(2+) serves as cofactor.

It is found in the cytoplasm. Its function is as follows. Single strand-specific metallo-endoribonuclease involved in late-stage 70S ribosome quality control and in maturation of the 3' terminus of the 16S rRNA. The sequence is that of Endoribonuclease YbeY from Thermus thermophilus (strain ATCC BAA-163 / DSM 7039 / HB27).